A 208-amino-acid polypeptide reads, in one-letter code: Outer-membrane lipoprotein carrier protein (208 aa).

Positions 1 to 21 (MRLIRTLFVAALAMGASLAHA) are cleaved as a signal peptide.

It belongs to the LolA family. As to quaternary structure, monomer.

Its subcellular location is the periplasm. In terms of biological role, participates in the translocation of lipoproteins from the inner membrane to the outer membrane. Only forms a complex with a lipoprotein if the residue after the N-terminal Cys is not an aspartate (The Asp acts as a targeting signal to indicate that the lipoprotein should stay in the inner membrane). The sequence is that of Outer-membrane lipoprotein carrier protein from Pseudomonas aeruginosa (strain UCBPP-PA14).